The sequence spans 473 residues: H(+)/Cl(-) exchange transporter ClcA (473 aa).

At methionine 1–proline 32 the chain is on the cytoplasmic side. A helical membrane pass occupies residues leucine 33–valine 69. Residues glutamine 70–phenylalanine 76 lie on the Periplasmic side of the membrane. The helical transmembrane segment at leucine 77–phenylalanine 100 threads the bilayer. A Selectivity filter part_1 motif is present at residues glycine 106 to proline 110. Serine 107 contributes to the chloride binding site. The helical intramembrane region spans isoleucine 109–leucine 116. Topologically, residues glutamate 117–arginine 123 are cytoplasmic. 2 helical membrane-spanning segments follow: residues tryptophan 124–alanine 141 and glutamate 148–phenylalanine 166. The short motif at glycine 146–proline 150 is the Selectivity filter part_2 element. The Cytoplasmic segment spans residues arginine 167–threonine 176. Intramembrane regions (helical) lie at residues leucine 177 to alanine 189 and proline 193 to isoleucine 201. The Cytoplasmic portion of the chain corresponds to glutamate 202–serine 214. A helical transmembrane segment spans residues isoleucine 215–phenylalanine 232. The Periplasmic segment spans residues asparagine 233–leucine 252. The chain crosses the membrane as a helical span at residues tryptophan 253 to glutamine 281. At arginine 282–glutamate 287 the chain is on the cytoplasmic side. The chain crosses the membrane as a helical span at residues isoleucine 288–glutamate 309. Residues proline 310–serine 329 lie on the Periplasmic side of the membrane. 2 consecutive transmembrane segments (helical) span residues valine 330 to serine 349 and glycine 355 to alanine 376. The short motif at glycine 355 to proline 359 is the Selectivity filter part_3 element. Positions 356 and 357 each coordinate chloride. Over valine 377–alanine 386 the chain is Periplasmic. The helical intramembrane region spans glycine 387–serine 401. The note=Loop between two helices intramembrane region spans valine 402–alanine 404. Positions proline 405 to threonine 416 form an intramembrane region, helical. Positions aspartate 417–leucine 421 form an intramembrane region, note=Loop between two helices. The chain crosses the membrane as a helical span at residues isoleucine 422–phenylalanine 438. Residues leucine 439–threonine 473 are Cytoplasmic-facing. A chloride-binding site is contributed by tyrosine 445.

It belongs to the chloride channel (TC 2.A.49) family. ClcA subfamily. Homodimer.

The protein localises to the cell inner membrane. The enzyme catalyses 2 chloride(in) + H(+)(out) = 2 chloride(out) + H(+)(in). Proton-coupled chloride transporter. Functions as antiport system and exchanges two chloride ions for 1 proton. Probably acts as an electrical shunt for an outwardly-directed proton pump that is linked to amino acid decarboxylation, as part of the extreme acid resistance (XAR) response. The protein is H(+)/Cl(-) exchange transporter ClcA of Salmonella newport (strain SL254).